The following is a 156-amino-acid chain: Bacterial microcompartment shell protein PduK (156 aa).

One can recognise a BMC domain in the interval Ser-4–Val-89. The tract at residues Gly-81–Ala-119 is disordered. A compositionally biased stretch (basic and acidic residues) spans Pro-106–Ala-116.

It belongs to the bacterial microcompartments protein family. In terms of assembly, interacts with shell protein PduA and assembly protein PduM. Interacts with PduP, probably with its first 18 residues. Fe cation serves as cofactor.

The protein localises to the bacterial microcompartment. It participates in polyol metabolism; 1,2-propanediol degradation. Functionally, a minor shell protein of the bacterial microcompartment (BMC) dedicated to 1,2-propanediol (1,2-PD) degradation. Expression of a cosmid containing the full 21-gene pdu operon in E.coli allows E.coli to grow on 1,2-propanediol (1,2-PD) with the appearance of bacterial microcompartments (BMC) in its cytoplasm. Overexpression of this protein leads to the appearance of a single large aggregate complex in the cytoplasm. Its function is as follows. The 1,2-PD-specific bacterial microcompartment (BMC) concentrates low levels of 1,2-PD catabolic enzymes, concentrates volatile reaction intermediates thus enhancing pathway flux and keeps the level of toxic, mutagenic propionaldehyde low. The sequence is that of Bacterial microcompartment shell protein PduK from Citrobacter freundii.